A 1342-amino-acid chain; its full sequence is DNA-directed RNA polymerase subunit beta (1342 aa).

This sequence belongs to the RNA polymerase beta chain family. In terms of assembly, the RNAP catalytic core consists of 2 alpha, 1 beta, 1 beta' and 1 omega subunit. When a sigma factor is associated with the core the holoenzyme is formed, which can initiate transcription.

The catalysed reaction is RNA(n) + a ribonucleoside 5'-triphosphate = RNA(n+1) + diphosphate. Its function is as follows. DNA-dependent RNA polymerase catalyzes the transcription of DNA into RNA using the four ribonucleoside triphosphates as substrates. This chain is DNA-directed RNA polymerase subunit beta, found in Yersinia pestis bv. Antiqua (strain Angola).